A 261-amino-acid polypeptide reads, in one-letter code: Chanoclavine-I dehydrogenase easD (261 aa).

NADP(+)-binding residues include isoleucine 18, lysine 48, aspartate 66, arginine 132, tyrosine 166, lysine 170, and threonine 201. Tyrosine 166 serves as the catalytic Proton donor. Residue lysine 170 is the Lowers pKa of active site Tyr of the active site.

Belongs to the short-chain dehydrogenases/reductases (SDR) family.

It carries out the reaction chanoclavine-I + NAD(+) = chanoclavine-I aldehyde + NADH + H(+). The protein operates within alkaloid biosynthesis; ergot alkaloid biosynthesis. Chanoclavine-I dehydrogenase; part of the gene cluster that mediates the biosynthesis of fumiclavanine C, a fungal ergot alkaloid. DmaW catalyzes the first step of ergot alkaloid biosynthesis by condensing dimethylallyl diphosphate (DMAP) and tryptophan to form 4-dimethylallyl-L-tryptophan. The second step is catalyzed by the methyltransferase easF that methylates 4-dimethylallyl-L-tryptophan in the presence of S-adenosyl-L-methionine, resulting in the formation of 4-dimethylallyl-L-abrine. The catalase easC and the FAD-dependent oxidoreductase easE then transform 4-dimethylallyl-L-abrine to chanoclavine-I which is further oxidized by EasD in the presence of NAD(+), resulting in the formation of chanoclavine-I aldehyde. EasA reduces chanoclavine-I aldehyde to dihydrochanoclavine-I aldehyde that spontaneously dehydrates to form 6,8-dimethyl-6,7-didehydroergoline. EasG then catalyzes the reduction of 6,8-dimethyl-6,7-didehydroergoline to form festuclavine. Hydrolysis of festuclavine by easM then leads to the formation of fumigaclavine B which is in turn acetylated by easN to fumigaclavine A. Finally, easL catalyzes the conversion of fumigaclavine A into fumigaclavine C by attaching a dimethylallyl moiety to C-2 of the indole nucleus. The chain is Chanoclavine-I dehydrogenase easD from Aspergillus fumigatus (strain ATCC MYA-4609 / CBS 101355 / FGSC A1100 / Af293) (Neosartorya fumigata).